Here is a 221-residue protein sequence, read N- to C-terminus: MKPAPTTQQELLTRAQQIAGLSFAELADEAGMTVPPDLRKDKGWVGQLLEWHLGATAGSRPQQDFEHLGIELKSIPISYTGKPLETTFVCVAPLTGVHGLTWEQSHVRNKLSKVLWIPVQGEREIPLAERCVGSPLLWSPSPEEEAQLKADWEELMEWIVLGKVAQITAKHGEVLQLRPKAANGRALTEAYGANGRPIKALPRGFYLRTQFTAQILQRYYA.

The protein belongs to the MutH family.

It is found in the cytoplasm. Functionally, sequence-specific endonuclease that cleaves unmethylated GATC sequences. It is involved in DNA mismatch repair. In Vibrio cholerae serotype O1 (strain ATCC 39315 / El Tor Inaba N16961), this protein is DNA mismatch repair protein MutH.